We begin with the raw amino-acid sequence, 160 residues long: Cyclic pyranopterin monophosphate synthase (160 aa).

Substrate-binding positions include 75 to 77 (LCH) and 113 to 114 (ME). Aspartate 128 is a catalytic residue.

Belongs to the MoaC family. As to quaternary structure, homohexamer; trimer of dimers.

It catalyses the reaction (8S)-3',8-cyclo-7,8-dihydroguanosine 5'-triphosphate = cyclic pyranopterin phosphate + diphosphate. It participates in cofactor biosynthesis; molybdopterin biosynthesis. Catalyzes the conversion of (8S)-3',8-cyclo-7,8-dihydroguanosine 5'-triphosphate to cyclic pyranopterin monophosphate (cPMP). In Methylobacterium sp. (strain 4-46), this protein is Cyclic pyranopterin monophosphate synthase.